A 451-amino-acid chain; its full sequence is Tubulin beta-4 chain (451 aa).

Residues Gln11, Glu69, Ser138, Gly142, Thr143, Gly144, Asn204, and Asn226 each contribute to the GTP site. Glu69 lines the Mg(2+) pocket. A compositionally biased stretch (polar residues) spans 417 to 427 (DLVSEYQQYQD). The interval 417 to 451 (DLVSEYQQYQDATAEEEGEYDEDDGGYGDEDDGMM) is disordered. Over residues 429–451 (TAEEEGEYDEDDGGYGDEDDGMM) the composition is skewed to acidic residues.

This sequence belongs to the tubulin family. As to quaternary structure, dimer of alpha and beta chains. A typical microtubule is a hollow water-filled tube with an outer diameter of 25 nm and an inner diameter of 15 nM. Alpha-beta heterodimers associate head-to-tail to form protofilaments running lengthwise along the microtubule wall with the beta-tubulin subunit facing the microtubule plus end conferring a structural polarity. Microtubules usually have 13 protofilaments but different protofilament numbers can be found in some organisms and specialized cells. Requires Mg(2+) as cofactor.

The protein localises to the cytoplasm. It is found in the cytoskeleton. In terms of biological role, tubulin is the major constituent of microtubules, a cylinder consisting of laterally associated linear protofilaments composed of alpha- and beta-tubulin heterodimers. Microtubules grow by the addition of GTP-tubulin dimers to the microtubule end, where a stabilizing cap forms. Below the cap, tubulin dimers are in GDP-bound state, owing to GTPase activity of alpha-tubulin. This chain is Tubulin beta-4 chain (TUBB4), found in Oomycete-like sp. (strain MacKay2000).